Here is a 90-residue protein sequence, read N- to C-terminus: DNA-directed RNA polymerase subunit omega (90 aa).

This sequence belongs to the RNA polymerase subunit omega family. As to quaternary structure, the RNAP catalytic core consists of 2 alpha, 1 beta, 1 beta' and 1 omega subunit. When a sigma factor is associated with the core the holoenzyme is formed, which can initiate transcription.

It carries out the reaction RNA(n) + a ribonucleoside 5'-triphosphate = RNA(n+1) + diphosphate. In terms of biological role, promotes RNA polymerase assembly. Latches the N- and C-terminal regions of the beta' subunit thereby facilitating its interaction with the beta and alpha subunits. This is DNA-directed RNA polymerase subunit omega from Histophilus somni (strain 129Pt) (Haemophilus somnus).